The primary structure comprises 215 residues: High frequency lysogenization protein HflD homolog (215 aa).

Belongs to the HflD family.

The protein resides in the cytoplasm. Its subcellular location is the cell inner membrane. The protein is High frequency lysogenization protein HflD homolog of Haemophilus ducreyi (strain 35000HP / ATCC 700724).